The following is a 249-amino-acid chain: MSVTMRQMLEAGCHFGHQTRFWSPKMAPFIFGHRNKIHIINLEKTLPMFQDALKFTKQVAANRGTILFVGTKRQSREIIAEEAARAGMPYIDSRWLGGTLTNFKTVKGSLKRLKDMEVAKEAGDWEKLSRKEALTNDRDLDKLQKALGGIKDLNGIPDAIFVVDVGYHKIAITEANKLGIPVIAVVDTNHSPEGVDYIIPGNDDSSKAVILYAHGIANAILEGKANSVQEILTAVKEGEEEFVEEGKVE.

The protein belongs to the universal ribosomal protein uS2 family.

The polypeptide is Small ribosomal subunit protein uS2 (Polynucleobacter necessarius subsp. necessarius (strain STIR1)).